A 593-amino-acid polypeptide reads, in one-letter code: Proteasome-associated ATPase (593 aa).

Positions 5–94 (DDADSRAARW…KEEIDRLAQP (90 aa)) form a coiled coil. 281–286 (GCGKTL) contributes to the ATP binding site. Residues 574-593 (GKGADAGRSIETASNTGQYL) are disordered. The segment covering 584–593 (ETASNTGQYL) has biased composition (polar residues). Residues 592-593 (YL) form a docks into pockets in the proteasome alpha-ring region.

Belongs to the AAA ATPase family. In terms of assembly, homohexamer. Assembles into a hexameric ring structure that caps the 20S proteasome core. Strongly interacts with the prokaryotic ubiquitin-like protein Pup through a hydrophobic interface; the interacting region of ARC lies in its N-terminal coiled-coil domain. There is one Pup binding site per ARC hexamer ring. Upon ATP-binding, the C-terminus of ARC interacts with the alpha-rings of the proteasome core, possibly by binding to the intersubunit pockets.

It participates in protein degradation; proteasomal Pup-dependent pathway. ATPase which is responsible for recognizing, binding, unfolding and translocation of pupylated proteins into the bacterial 20S proteasome core particle. May be essential for opening the gate of the 20S proteasome via an interaction with its C-terminus, thereby allowing substrate entry and access to the site of proteolysis. Thus, the C-termini of the proteasomal ATPase may function like a 'key in a lock' to induce gate opening and therefore regulate proteolysis. The polypeptide is Proteasome-associated ATPase (Salinispora arenicola (strain CNS-205)).